The sequence spans 926 residues: Chitin synthase-like protein 2 (926 aa).

A disordered region spans residues 1 to 56 (MSFQNPSYINAKHRSFLQPKDTQDSQDLRNWVSHSSVDEETAYSSSTLSSSSSKSF). Residues 44–55 (SSSTLSSSSSKS) are compositionally biased toward low complexity. 7 helical membrane passes run 564-584 (INSS…LWTT), 599-619 (LVFA…FLAF), 641-661 (LFLV…MLAM), 671-691 (LLFI…FCVF), 721-741 (LLIL…FFIF), 853-873 (VLVW…VFDG), and 885-905 (IFWS…TFIA).

Belongs to the chitin synthase family.

Its subcellular location is the membrane. Its function is as follows. Plays a role in septum formation. Has no chitin synthase activity. This is Chitin synthase-like protein 2 (chs2) from Schizosaccharomyces pombe (strain 972 / ATCC 24843) (Fission yeast).